Here is a 58-residue protein sequence, read N- to C-terminus: UPF0509 protein YciZ (58 aa).

It belongs to the UPF0509 family.

This Escherichia fergusonii (strain ATCC 35469 / DSM 13698 / CCUG 18766 / IAM 14443 / JCM 21226 / LMG 7866 / NBRC 102419 / NCTC 12128 / CDC 0568-73) protein is UPF0509 protein YciZ.